The primary structure comprises 138 residues: Large ribosomal subunit protein uL16 (138 aa).

The span at 1-16 shows a compositional bias: basic residues; sequence MLIPRRVKHRKQHHPS. The interval 1 to 25 is disordered; that stretch reads MLIPRRVKHRKQHHPSRSGAAKGGT.

Belongs to the universal ribosomal protein uL16 family. In terms of assembly, part of the 50S ribosomal subunit.

Functionally, binds 23S rRNA and is also seen to make contacts with the A and possibly P site tRNAs. The chain is Large ribosomal subunit protein uL16 from Rhodococcus jostii (strain RHA1).